Reading from the N-terminus, the 121-residue chain is Large ribosomal subunit protein uL22 (121 aa).

Belongs to the universal ribosomal protein uL22 family. As to quaternary structure, part of the 50S ribosomal subunit.

This protein binds specifically to 23S rRNA; its binding is stimulated by other ribosomal proteins, e.g. L4, L17, and L20. It is important during the early stages of 50S assembly. It makes multiple contacts with different domains of the 23S rRNA in the assembled 50S subunit and ribosome. Its function is as follows. The globular domain of the protein is located near the polypeptide exit tunnel on the outside of the subunit, while an extended beta-hairpin is found that lines the wall of the exit tunnel in the center of the 70S ribosome. The chain is Large ribosomal subunit protein uL22 from Salinibacter ruber (strain DSM 13855 / M31).